The primary structure comprises 1290 residues: DNA-directed RNA polymerase subunit beta' (1290 aa).

Positions 60, 62, 75, and 78 each coordinate Zn(2+). Mg(2+) contacts are provided by Asp-535, Asp-537, and Asp-539. The Zn(2+) site is built by Cys-875, Cys-953, Cys-960, and Cys-963.

The protein belongs to the RNA polymerase beta' chain family. The RNAP catalytic core consists of 2 alpha, 1 beta, 1 beta' and 1 omega subunit. When a sigma factor is associated with the core the holoenzyme is formed, which can initiate transcription. It depends on Mg(2+) as a cofactor. Zn(2+) serves as cofactor.

The catalysed reaction is RNA(n) + a ribonucleoside 5'-triphosphate = RNA(n+1) + diphosphate. Functionally, DNA-dependent RNA polymerase catalyzes the transcription of DNA into RNA using the four ribonucleoside triphosphates as substrates. The sequence is that of DNA-directed RNA polymerase subunit beta' from Nocardioides sp. (strain ATCC BAA-499 / JS614).